A 480-amino-acid chain; its full sequence is 2-phosphoxylose phosphatase 1 (480 aa).

The Cytoplasmic segment spans residues 1-6 (MLYRNR). Residues 7-27 (FLVLLALAGLLAFLSLSLQFF) traverse the membrane as a helical; Signal-anchor for type II membrane protein segment. The Lumenal portion of the chain corresponds to 28–480 (HLIPVSTTKN…YYDACHGEGA (453 aa)). His97 acts as the Nucleophile in catalysis. Residues Asn194, Asn305, and Asn354 are each glycosylated (N-linked (GlcNAc...) asparagine). Asp379 serves as the catalytic Proton donor.

It belongs to the histidine acid phosphatase family. In terms of assembly, interacts with B3GAT3; the interaction increases the 2-phosphoxylose phosphatase activity of PXYLP1 during completion of linkage region formation in a B3GAT3-mediated manner.

The protein localises to the golgi apparatus membrane. It catalyses the reaction 3-O-[beta-D-GlcA-(1-&gt;3)-beta-D-Gal-(1-&gt;3)-beta-D-Gal-(1-&gt;4)-beta-D-2-O-P-Xyl]-L-seryl-[protein] + H2O = 3-O-(beta-D-GlcA-(1-&gt;3)-beta-D-Gal-(1-&gt;3)-beta-D-Gal-(1-&gt;4)-beta-D-Xyl)-L-seryl-[protein] + phosphate. In terms of biological role, responsible for the 2-O-dephosphorylation of xylose in the glycosaminoglycan-protein linkage region of proteoglycans thereby regulating the amount of mature glycosaminoglycan (GAG) chains. Sulfated glycosaminoglycans (GAGs), including heparan sulfate and chondroitin sulfate, are synthesized on the so-called common GAG-protein linkage region (GlcUAbeta1-3Galbeta1-3Galbeta1-4Xylbeta1-O-Ser) of core proteins, which is formed by the stepwise addition of monosaccharide residues by the respective specific glycosyltransferases. Xylose 2-O-dephosphorylation during completion of linkage region formation is a prerequisite for the initiation and efficient elongation of the repeating disaccharide region of GAG chains. The sequence is that of 2-phosphoxylose phosphatase 1 from Rattus norvegicus (Rat).